The sequence spans 406 residues: Glucose-1-phosphate adenylyltransferase (406 aa).

Alpha-D-glucose 1-phosphate contacts are provided by residues tyrosine 100, glycine 165, 181-182 (EK), and serine 199.

It belongs to the bacterial/plant glucose-1-phosphate adenylyltransferase family. In terms of assembly, homotetramer.

The catalysed reaction is alpha-D-glucose 1-phosphate + ATP + H(+) = ADP-alpha-D-glucose + diphosphate. It functions in the pathway glycan biosynthesis; glycogen biosynthesis. Its function is as follows. Involved in the biosynthesis of ADP-glucose, a building block required for the elongation reactions to produce glycogen. Catalyzes the reaction between ATP and alpha-D-glucose 1-phosphate (G1P) to produce pyrophosphate and ADP-Glc. The chain is Glucose-1-phosphate adenylyltransferase from Streptomyces avermitilis (strain ATCC 31267 / DSM 46492 / JCM 5070 / NBRC 14893 / NCIMB 12804 / NRRL 8165 / MA-4680).